A 212-amino-acid chain; its full sequence is RNA chaperone ProQ (212 aa).

The disordered stretch occupies residues arginine 114 to valine 149. The span at alanine 118 to lysine 129 shows a compositional bias: low complexity. The span at lysine 130 to lysine 141 shows a compositional bias: basic residues.

The protein belongs to the ProQ family.

The protein resides in the cytoplasm. Functionally, RNA chaperone with significant RNA binding, RNA strand exchange and RNA duplexing activities. This is RNA chaperone ProQ from Shewanella piezotolerans (strain WP3 / JCM 13877).